The chain runs to 194 residues: uncharacterized protein (194 aa).

The first 20 residues, 1–20 (MLYKFTVLLLIYSYLRNLQA), serve as a signal peptide directing secretion. N-linked (GlcNAc...) asparagine; by host glycans are attached at residues asparagine 31, asparagine 72, asparagine 133, and asparagine 157.

This is an uncharacterized protein from Ostreid herpesvirus 1 (isolate France) (OsHV-1).